A 519-amino-acid polypeptide reads, in one-letter code: Glucoamylase GLU1 (519 aa).

Residues 1-27 form the signal peptide; it reads MKFGVLFSVFAAIVSALPLQEGPLNKR. N-linked (GlcNAc...) asparagine glycans are attached at residues N115 and N127. Residue W166 coordinates substrate. An N-linked (GlcNAc...) asparagine glycan is attached at N205. D234 serves as the catalytic Proton acceptor. Residue E237 is the Proton donor of the active site.

Belongs to the glycosyl hydrolase 15 family.

The enzyme catalyses Hydrolysis of terminal (1-&gt;4)-linked alpha-D-glucose residues successively from non-reducing ends of the chains with release of beta-D-glucose.. This Saccharomycopsis fibuligera (Yeast) protein is Glucoamylase GLU1 (GLU1).